The following is a 150-amino-acid chain: 3-dehydroquinate dehydratase (150 aa).

Tyr26 functions as the Proton acceptor in the catalytic mechanism. Asn77, His83, and Asp90 together coordinate substrate. Catalysis depends on His103, which acts as the Proton donor. Residues 104-105 (LS) and Arg114 contribute to the substrate site.

It belongs to the type-II 3-dehydroquinase family. In terms of assembly, homododecamer.

The catalysed reaction is 3-dehydroquinate = 3-dehydroshikimate + H2O. The protein operates within metabolic intermediate biosynthesis; chorismate biosynthesis; chorismate from D-erythrose 4-phosphate and phosphoenolpyruvate: step 3/7. Catalyzes a trans-dehydration via an enolate intermediate. This Vibrio cholerae serotype O1 (strain ATCC 39541 / Classical Ogawa 395 / O395) protein is 3-dehydroquinate dehydratase.